The primary structure comprises 189 residues: Casparian strip membrane protein 1 (189 aa).

Residues Met-1–Ser-42 are Cytoplasmic-facing. A helical membrane pass occupies residues Ile-43–Met-63. Over Gly-64–Thr-90 the chain is Extracellular. The chain crosses the membrane as a helical span at residues Phe-91–Ile-111. Over Val-112–Asp-130 the chain is Cytoplasmic. A helical membrane pass occupies residues Thr-131–Ala-151. Over His-152–Ser-189 the chain is Extracellular.

The protein belongs to the Casparian strip membrane proteins (CASP) family. Homodimer and heterodimers.

It is found in the cell membrane. In terms of biological role, regulates membrane-cell wall junctions and localized cell wall deposition. Required for establishment of the Casparian strip membrane domain (CSD) and the subsequent formation of Casparian strips, a cell wall modification of the root endodermis that determines an apoplastic barrier between the intraorganismal apoplasm and the extraorganismal apoplasm and prevents lateral diffusion. The polypeptide is Casparian strip membrane protein 1 (Striga asiatica (Asiatic witchweed)).